Consider the following 315-residue polypeptide: Beta-ketoacyl-[acyl-carrier-protein] synthase III (315 aa).

Catalysis depends on residues Cys115 and His244. The interval 245 to 249 (QANAR) is ACP-binding. Asn274 is a catalytic residue.

This sequence belongs to the thiolase-like superfamily. FabH family. In terms of assembly, homodimer.

The protein localises to the cytoplasm. The enzyme catalyses malonyl-[ACP] + acetyl-CoA + H(+) = 3-oxobutanoyl-[ACP] + CO2 + CoA. It functions in the pathway lipid metabolism; fatty acid biosynthesis. In terms of biological role, catalyzes the condensation reaction of fatty acid synthesis by the addition to an acyl acceptor of two carbons from malonyl-ACP. Catalyzes the first condensation reaction which initiates fatty acid synthesis and may therefore play a role in governing the total rate of fatty acid production. Possesses both acetoacetyl-ACP synthase and acetyl transacylase activities. Its substrate specificity determines the biosynthesis of branched-chain and/or straight-chain of fatty acids. The sequence is that of Beta-ketoacyl-[acyl-carrier-protein] synthase III from Rubrobacter xylanophilus (strain DSM 9941 / JCM 11954 / NBRC 16129 / PRD-1).